Here is a 180-residue protein sequence, read N- to C-terminus: MTLKELLVGFGTQVRSIWMIGLHAFAKRETRMYPEEPVYLPPRYRGRIVLTRDPDGEERCVACNLCAVACPVGCISLQKAETKDGRWYPEFFRINFSRCIFCGLCEEACPTTAIQLTPDFELGEYKRQDLVYEKEDLLISGPGKYPEYNFYRMAGMAIDGKDKGEAENEAKPIDVKSLLP.

4Fe-4S ferredoxin-type domains are found at residues 50–80 and 90–119; these read LTRD…LQKA and EFFR…LTPD. [4Fe-4S] cluster-binding residues include Cys-60, Cys-63, Cys-66, Cys-70, Cys-99, Cys-102, Cys-105, and Cys-109.

The protein belongs to the complex I 23 kDa subunit family. In terms of assembly, NDH-1 is composed of 13 different subunits. Subunits NuoA, H, J, K, L, M, N constitute the membrane sector of the complex. [4Fe-4S] cluster serves as cofactor.

It localises to the cell inner membrane. The enzyme catalyses a quinone + NADH + 5 H(+)(in) = a quinol + NAD(+) + 4 H(+)(out). NDH-1 shuttles electrons from NADH, via FMN and iron-sulfur (Fe-S) centers, to quinones in the respiratory chain. The immediate electron acceptor for the enzyme in this species is believed to be ubiquinone. Couples the redox reaction to proton translocation (for every two electrons transferred, four hydrogen ions are translocated across the cytoplasmic membrane), and thus conserves the redox energy in a proton gradient. This is NADH-quinone oxidoreductase subunit I from Salmonella choleraesuis (strain SC-B67).